Consider the following 312-residue polypeptide: tRNA dimethylallyltransferase (312 aa).

15–22 contributes to the ATP binding site; sequence GPTAAGKS. 17 to 22 contributes to the substrate binding site; the sequence is TAAGKS. Residues 40–43 form an interaction with substrate tRNA region; sequence DSMQ.

This sequence belongs to the IPP transferase family. In terms of assembly, monomer. Mg(2+) is required as a cofactor.

It carries out the reaction adenosine(37) in tRNA + dimethylallyl diphosphate = N(6)-dimethylallyladenosine(37) in tRNA + diphosphate. Functionally, catalyzes the transfer of a dimethylallyl group onto the adenine at position 37 in tRNAs that read codons beginning with uridine, leading to the formation of N6-(dimethylallyl)adenosine (i(6)A). This Streptomyces griseus subsp. griseus (strain JCM 4626 / CBS 651.72 / NBRC 13350 / KCC S-0626 / ISP 5235) protein is tRNA dimethylallyltransferase.